The chain runs to 188 residues: Peptidyl-tRNA hydrolase (188 aa).

Residue phenylalanine 15 coordinates tRNA. Histidine 20 (proton acceptor) is an active-site residue. Residues tyrosine 64, asparagine 66, and asparagine 112 each coordinate tRNA.

This sequence belongs to the PTH family. In terms of assembly, monomer.

Its subcellular location is the cytoplasm. The catalysed reaction is an N-acyl-L-alpha-aminoacyl-tRNA + H2O = an N-acyl-L-amino acid + a tRNA + H(+). Its function is as follows. Hydrolyzes ribosome-free peptidyl-tRNAs (with 1 or more amino acids incorporated), which drop off the ribosome during protein synthesis, or as a result of ribosome stalling. Functionally, catalyzes the release of premature peptidyl moieties from peptidyl-tRNA molecules trapped in stalled 50S ribosomal subunits, and thus maintains levels of free tRNAs and 50S ribosomes. The sequence is that of Peptidyl-tRNA hydrolase from Borrelia turicatae (strain 91E135).